The primary structure comprises 371 residues: Alanine racemase (371 aa).

The Proton acceptor; specific for D-alanine role is filled by Lys35. N6-(pyridoxal phosphate)lysine is present on Lys35. Arg130 serves as a coordination point for substrate. Residue Tyr256 is the Proton acceptor; specific for L-alanine of the active site. Substrate is bound at residue Met304.

It belongs to the alanine racemase family. Pyridoxal 5'-phosphate is required as a cofactor.

The catalysed reaction is L-alanine = D-alanine. It functions in the pathway amino-acid biosynthesis; D-alanine biosynthesis; D-alanine from L-alanine: step 1/1. Its function is as follows. Catalyzes the interconversion of L-alanine and D-alanine. May also act on other amino acids. The polypeptide is Alanine racemase (alr) (Verminephrobacter eiseniae (strain EF01-2)).